Reading from the N-terminus, the 510-residue chain is Maturase K (510 aa).

It belongs to the intron maturase 2 family. MatK subfamily.

It is found in the plastid. The protein localises to the chloroplast. Usually encoded in the trnK tRNA gene intron. Probably assists in splicing its own and other chloroplast group II introns. The polypeptide is Maturase K (Cestrum elegans (Red cestrum)).